Reading from the N-terminus, the 372-residue chain is Transaldolase 2 (372 aa).

Lys-140 serves as the catalytic Schiff-base intermediate with substrate.

Belongs to the transaldolase family. Type 2 subfamily.

It localises to the cytoplasm. It carries out the reaction D-sedoheptulose 7-phosphate + D-glyceraldehyde 3-phosphate = D-erythrose 4-phosphate + beta-D-fructose 6-phosphate. It participates in carbohydrate degradation; pentose phosphate pathway; D-glyceraldehyde 3-phosphate and beta-D-fructose 6-phosphate from D-ribose 5-phosphate and D-xylulose 5-phosphate (non-oxidative stage): step 2/3. Functionally, transaldolase is important for the balance of metabolites in the pentose-phosphate pathway. This Streptomyces avermitilis (strain ATCC 31267 / DSM 46492 / JCM 5070 / NBRC 14893 / NCIMB 12804 / NRRL 8165 / MA-4680) protein is Transaldolase 2.